The following is a 311-amino-acid chain: L-lactate dehydrogenase 2 (311 aa).

3 residues coordinate NAD(+): V14, D35, and R40. Residue R90 participates in substrate binding. NAD(+) is bound by residues S103, 120-122 (ATN), and T145. 122 to 125 (NPCD) contacts substrate. Residue 150–153 (DTTR) coordinates substrate. H177 serves as the catalytic Proton acceptor. A substrate-binding site is contributed by T230.

This sequence belongs to the LDH/MDH superfamily. LDH family. Homotetramer.

The protein resides in the cytoplasm. It catalyses the reaction (S)-lactate + NAD(+) = pyruvate + NADH + H(+). It participates in fermentation; pyruvate fermentation to lactate; (S)-lactate from pyruvate: step 1/1. Its function is as follows. Catalyzes the conversion of lactate to pyruvate. This Listeria innocua serovar 6a (strain ATCC BAA-680 / CLIP 11262) protein is L-lactate dehydrogenase 2.